The primary structure comprises 508 residues: Photosystem II CP47 reaction center protein (508 aa).

The next 6 helical transmembrane spans lie at 21–36 (AVHI…WAGS), 101–115 (IVFS…IWHW), 140–156 (GIHL…FGAF), 203–218 (IAAG…FHLS), 237–252 (VLSS…AFVV), and 457–472 (SFAL…HGAR).

The protein belongs to the PsbB/PsbC family. PsbB subfamily. In terms of assembly, PSII is composed of 1 copy each of membrane proteins PsbA, PsbB, PsbC, PsbD, PsbE, PsbF, PsbH, PsbI, PsbJ, PsbK, PsbL, PsbM, PsbT, PsbX, PsbY, PsbZ, Psb30/Ycf12, at least 3 peripheral proteins of the oxygen-evolving complex and a large number of cofactors. It forms dimeric complexes. Requires Binds multiple chlorophylls. PSII binds additional chlorophylls, carotenoids and specific lipids. as cofactor.

Its subcellular location is the plastid. The protein resides in the chloroplast thylakoid membrane. Functionally, one of the components of the core complex of photosystem II (PSII). It binds chlorophyll and helps catalyze the primary light-induced photochemical processes of PSII. PSII is a light-driven water:plastoquinone oxidoreductase, using light energy to abstract electrons from H(2)O, generating O(2) and a proton gradient subsequently used for ATP formation. This chain is Photosystem II CP47 reaction center protein, found in Daucus carota (Wild carrot).